A 442-amino-acid polypeptide reads, in one-letter code: MRAIGVIRNSRRERLSRAEFEELLRSAGYEVLAIVEQNREEHPRYNIGPGKLEELKELVKELKPDKVIFANRLTPSQAYNLWKELRIEIMDRWQLVLEIFEKRAHSKEAKLQVELASLQYEIPLVKEAIRRIRLGDRAGFKGMGEYQTQQYLKHIRYRMGKIRDELERVKADREVKRKKRENAGFVLVALAGYTNAGKSTLLNALADENVEAKNQMFTTLDTTTRRFRLGTKRILATDTVGFIDGLPPFIVEAFHSTLEEIVKADIVLLVLDSSEPWGEIRRKFLASLQVLRELKALEKPIIVALNKIDLIEEADAEEKVRLIWELARERGISLEDVVKISAREGRLEELMDALNRVVLKLPKYGAFRIIVKEPEKVPAVMALINSVGEVLSVEYGEKTRIDAYVQTGMVGEIKKMGAEIERLNHSGEGEELEQDEGYSDGG.

The Hflx-type G domain maps to 186–362; that stretch reads VLVALAGYTN…ALNRVVLKLP (177 aa). GTP is bound by residues 192 to 199, 217 to 221, 238 to 241, 306 to 309, and 341 to 343; these read GYTNAGKS, FTTLD, DTVG, NKID, and SAR. S199 and T219 together coordinate Mg(2+).

It belongs to the TRAFAC class OBG-HflX-like GTPase superfamily. HflX GTPase family. In terms of assembly, monomer. Associates with the 50S ribosomal subunit. Mg(2+) is required as a cofactor.

It is found in the cytoplasm. In terms of biological role, GTPase that associates with the 50S ribosomal subunit and may have a role during protein synthesis or ribosome biogenesis. In Thermococcus kodakarensis (strain ATCC BAA-918 / JCM 12380 / KOD1) (Pyrococcus kodakaraensis (strain KOD1)), this protein is GTPase HflX.